The following is a 352-amino-acid chain: Rhodopsin (352 aa).

The Extracellular portion of the chain corresponds to 1 to 36 (MNGTEGPYFYVPMSNATGVVRSPYEYPQYYLAPPWA). Residues asparagine 2 and asparagine 15 are each glycosylated (N-linked (GlcNAc...) asparagine). A helical membrane pass occupies residues 37–61 (YACLAAYMFFLILVGFPVNFLTLYV). Residues 62–73 (TIEHKKLRTPLN) are Cytoplasmic-facing. The chain crosses the membrane as a helical span at residues 74 to 96 (YILLNLAVADLFMVFGGFTTTMY). Residues 97–110 (TSLNGYFVFGRLGC) lie on the Extracellular side of the membrane. Residues cysteine 110 and cysteine 187 are joined by a disulfide bond. Residues 111-133 (NLEGFFATFGGINSLWCLVVLSI) form a helical membrane-spanning segment. The 'Ionic lock' involved in activated form stabilization motif lies at 134–136 (ERW). Residues 134–152 (ERWVVVCKPMSNFRFGENH) are Cytoplasmic-facing. Residues 153-173 (AIMGVAFTWFMALACTVPPLV) form a helical membrane-spanning segment. Over 174–202 (GWSRYIPEGMQCSCGIDYYTRAEGFNNES) the chain is Extracellular. The helical transmembrane segment at 203-224 (FVIYMFVVHFLTPLFVITFCYG) threads the bilayer. Residues 225 to 252 (RLVCTVKEAAAQQQESETTQRAEREVTR) lie on the Cytoplasmic side of the membrane. A helical transmembrane segment spans residues 253-274 (MVILMFIAYLVCWLPYASVSWW). Residues 275 to 286 (IFTNQGSEFGPI) lie on the Extracellular side of the membrane. A helical transmembrane segment spans residues 287–308 (FMTVPAFFAKSSSIYNPVIYIC). Lysine 296 carries the N6-(retinylidene)lysine modification. Topologically, residues 309–352 (LNKQFRHCMITTLCCGKNPFEEEEGASTTASKTEASSVSSVSPA) are cytoplasmic. Residues cysteine 322 and cysteine 323 are each lipidated (S-palmitoyl cysteine). A disordered region spans residues 331-352 (EEGASTTASKTEASSVSSVSPA). Residues 334-352 (ASTTASKTEASSVSSVSPA) are compositionally biased toward low complexity.

It belongs to the G-protein coupled receptor 1 family. Opsin subfamily. Post-translationally, phosphorylated on some or all of the serine and threonine residues present in the C-terminal region. In terms of processing, contains one covalently linked retinal chromophore.

It is found in the membrane. It localises to the cell projection. The protein localises to the cilium. The protein resides in the photoreceptor outer segment. Functionally, photoreceptor required for image-forming vision at low light intensity. While most salt water fish species use retinal as chromophore, most freshwater fish use 3-dehydroretinal, or a mixture of retinal and 3-dehydroretinal. Light-induced isomerization of 11-cis to all-trans retinal triggers a conformational change that activates signaling via G-proteins. Subsequent receptor phosphorylation mediates displacement of the bound G-protein alpha subunit by arrestin and terminates signaling. This Psalidodon fasciatus (Banded astyanax) protein is Rhodopsin (rho).